The chain runs to 624 residues: DNA mismatch repair protein MutL (624 aa).

Residues 336 to 357 (GEGFHETSDSFSSRSSQHSDAR) are disordered. A compositionally biased stretch (low complexity) spans 344 to 353 (DSFSSRSSQH).

It belongs to the DNA mismatch repair MutL/HexB family.

This protein is involved in the repair of mismatches in DNA. It is required for dam-dependent methyl-directed DNA mismatch repair. May act as a 'molecular matchmaker', a protein that promotes the formation of a stable complex between two or more DNA-binding proteins in an ATP-dependent manner without itself being part of a final effector complex. In Chlorobium phaeobacteroides (strain BS1), this protein is DNA mismatch repair protein MutL.